We begin with the raw amino-acid sequence, 503 residues long: Cytochrome P450 3A9 (503 aa).

C442 is a binding site for heme.

It belongs to the cytochrome P450 family. Heme is required as a cofactor. As to expression, mainly expressed in olfactory epithelium.

It localises to the endoplasmic reticulum membrane. The protein localises to the microsome membrane. It carries out the reaction an organic molecule + reduced [NADPH--hemoprotein reductase] + O2 = an alcohol + oxidized [NADPH--hemoprotein reductase] + H2O + H(+). This isozyme seems to be implicated in olfaction. Active in the demethylation of erythromycin as well as benzphetamine. The sequence is that of Cytochrome P450 3A9 (Cyp3a9) from Rattus norvegicus (Rat).